The following is a 114-amino-acid chain: Large ribosomal subunit protein uL22 (114 aa).

Belongs to the universal ribosomal protein uL22 family. Part of the 50S ribosomal subunit.

This protein binds specifically to 23S rRNA; its binding is stimulated by other ribosomal proteins, e.g. L4, L17, and L20. It is important during the early stages of 50S assembly. It makes multiple contacts with different domains of the 23S rRNA in the assembled 50S subunit and ribosome. Its function is as follows. The globular domain of the protein is located near the polypeptide exit tunnel on the outside of the subunit, while an extended beta-hairpin is found that lines the wall of the exit tunnel in the center of the 70S ribosome. The chain is Large ribosomal subunit protein uL22 from Lysinibacillus sphaericus (strain C3-41).